The sequence spans 312 residues: tRNA (adenine(58)-N(1))-methyltransferase catalytic subunit trmt61a (312 aa).

S-adenosyl-L-methionine is bound by residues Leu85, 112 to 114 (SGS), Glu133, Arg138, 161 to 162 (DA), and Asp183.

Belongs to the class I-like SAM-binding methyltransferase superfamily. TRM61 family. In terms of assembly, heterotetramer; composed of two copies of trmt6 and two copies of trmt61a.

Its subcellular location is the nucleus. The enzyme catalyses adenosine(58) in tRNA + S-adenosyl-L-methionine = N(1)-methyladenosine(58) in tRNA + S-adenosyl-L-homocysteine + H(+). Its activity is regulated as follows. Inhibited by calcium and magnesium ions and spermidine. Enhanced by KCl, NaCl and NH(4)Cl in concentrations from 0.1-0.25 M. Concentrations of more than 0.3 M are inhibitory. Catalytic subunit of tRNA (adenine-N(1)-)-methyltransferase, which catalyzes the formation of N(1)-methyladenine at position 58 (m1A58) in initiator methionyl-tRNA. This is tRNA (adenine(58)-N(1))-methyltransferase catalytic subunit trmt61a (trmt61a) from Dictyostelium discoideum (Social amoeba).